The chain runs to 125 residues: Fluoride-specific ion channel FluC (125 aa).

The next 4 helical transmembrane spans lie at 4-24 (WLFV…ISEL), 35-55 (YGTL…FALI), 69-89 (LMVG…DTVV), and 103-123 (MGLN…LVAS). Gly75 and Thr78 together coordinate Na(+).

Belongs to the fluoride channel Fluc/FEX (TC 1.A.43) family.

The protein localises to the cell inner membrane. The enzyme catalyses fluoride(in) = fluoride(out). With respect to regulation, na(+) is not transported, but it plays an essential structural role and its presence is essential for fluoride channel function. In terms of biological role, fluoride-specific ion channel. Important for reducing fluoride concentration in the cell, thus reducing its toxicity. The chain is Fluoride-specific ion channel FluC from Aeromonas salmonicida (strain A449).